The following is a 54-amino-acid chain: MAAKSQIIEFSLKCTECNNRNYYKKKNRNYKEKIELKKYCPHCRKHTLHVESKI.

It belongs to the bacterial ribosomal protein bL33 family.

In Petrotoga mobilis (strain DSM 10674 / SJ95), this protein is Large ribosomal subunit protein bL33.